The chain runs to 322 residues: Lipoyl synthase (322 aa).

Residues C69, C74, C80, C95, C99, C102, and S309 each contribute to the [4Fe-4S] cluster site. The Radical SAM core domain occupies 81 to 298 (FNHGTATFMI…GVKAKALGFD (218 aa)).

It belongs to the radical SAM superfamily. Lipoyl synthase family. The cofactor is [4Fe-4S] cluster.

Its subcellular location is the cytoplasm. The enzyme catalyses [[Fe-S] cluster scaffold protein carrying a second [4Fe-4S](2+) cluster] + N(6)-octanoyl-L-lysyl-[protein] + 2 oxidized [2Fe-2S]-[ferredoxin] + 2 S-adenosyl-L-methionine + 4 H(+) = [[Fe-S] cluster scaffold protein] + N(6)-[(R)-dihydrolipoyl]-L-lysyl-[protein] + 4 Fe(3+) + 2 hydrogen sulfide + 2 5'-deoxyadenosine + 2 L-methionine + 2 reduced [2Fe-2S]-[ferredoxin]. The protein operates within protein modification; protein lipoylation via endogenous pathway; protein N(6)-(lipoyl)lysine from octanoyl-[acyl-carrier-protein]: step 2/2. In terms of biological role, catalyzes the radical-mediated insertion of two sulfur atoms into the C-6 and C-8 positions of the octanoyl moiety bound to the lipoyl domains of lipoate-dependent enzymes, thereby converting the octanoylated domains into lipoylated derivatives. The protein is Lipoyl synthase of Psychromonas ingrahamii (strain DSM 17664 / CCUG 51855 / 37).